Reading from the N-terminus, the 308-residue chain is Protoheme IX farnesyltransferase (308 aa).

8 helical membrane-spanning segments follow: residues 20 to 40 (LLAY…VTAI), 50 to 70 (AIHP…ATGA), 102 to 122 (NALA…WCAT), 124 to 144 (LLAG…YTLW), 149 to 169 (TSQN…IGWS), 170 to 190 (AITG…FFWT), 227 to 249 (LIYT…WLYG), and 288 to 308 (YLAV…PTLH).

The protein belongs to the UbiA prenyltransferase family. Protoheme IX farnesyltransferase subfamily.

It localises to the cell membrane. It catalyses the reaction heme b + (2E,6E)-farnesyl diphosphate + H2O = Fe(II)-heme o + diphosphate. It functions in the pathway porphyrin-containing compound metabolism; heme O biosynthesis; heme O from protoheme: step 1/1. Converts heme B (protoheme IX) to heme O by substitution of the vinyl group on carbon 2 of heme B porphyrin ring with a hydroxyethyl farnesyl side group. This Mycobacterium bovis (strain BCG / Pasteur 1173P2) protein is Protoheme IX farnesyltransferase.